The primary structure comprises 322 residues: Undecaprenyl-phosphate 4-deoxy-4-formamido-L-arabinose transferase (322 aa).

The Cytoplasmic portion of the chain corresponds to 1–235; it reads MFEIHPVKKV…TCLTTTPLRM (235 aa). A helical membrane pass occupies residues 236–256; that stretch reads LSLLGSIIAIGGFSIAVLLVI. At 257–269 the chain is on the periplasmic side; the sequence is LRLTFGPQWAAEG. Residues 270 to 290 form a helical membrane-spanning segment; that stretch reads VFMLFAVLFTFIGAQFIGMGL. At 291–322 the chain is on the cytoplasmic side; that stretch reads LGEYIGRIYTDVRARPRYFVQQVIRPSSKENE.

It belongs to the glycosyltransferase 2 family.

It is found in the cell inner membrane. It carries out the reaction UDP-4-deoxy-4-formamido-beta-L-arabinose + di-trans,octa-cis-undecaprenyl phosphate = 4-deoxy-4-formamido-alpha-L-arabinopyranosyl di-trans,octa-cis-undecaprenyl phosphate + UDP. It participates in glycolipid biosynthesis; 4-amino-4-deoxy-alpha-L-arabinose undecaprenyl phosphate biosynthesis; 4-amino-4-deoxy-alpha-L-arabinose undecaprenyl phosphate from UDP-4-deoxy-4-formamido-beta-L-arabinose and undecaprenyl phosphate: step 1/2. The protein operates within bacterial outer membrane biogenesis; lipopolysaccharide biosynthesis. Functionally, catalyzes the transfer of 4-deoxy-4-formamido-L-arabinose from UDP to undecaprenyl phosphate. The modified arabinose is attached to lipid A and is required for resistance to polymyxin and cationic antimicrobial peptides. This is Undecaprenyl-phosphate 4-deoxy-4-formamido-L-arabinose transferase from Shigella flexneri serotype 5b (strain 8401).